The primary structure comprises 138 residues: Gastrula zinc finger protein XlCGF44.2 (138 aa).

5 consecutive C2H2-type zinc fingers follow at residues 5–27 (FACT…KRIH), 32–54 (FVCA…QRLH), 60–82 (FTCT…QQIH), 88–110 (YVCS…MKTH), and 116–138 (FACS…QESH).

The protein belongs to the krueppel C2H2-type zinc-finger protein family.

It is found in the nucleus. Its function is as follows. May be involved in transcriptional regulation. This chain is Gastrula zinc finger protein XlCGF44.2, found in Xenopus laevis (African clawed frog).